A 135-amino-acid chain; its full sequence is Cystatin-1 (135 aa).

Positions 1-24 are cleaved as a signal peptide; the sequence is MRKHRIVSLVAALLVLLALAAVSS. The Secondary area of contact signature appears at 86 to 90; the sequence is QVVAG.

It belongs to the cystatin family. Phytocystatin subfamily.

The chain is Cystatin-1 (RAMDAZC7) from Zea mays (Maize).